We begin with the raw amino-acid sequence, 232 residues long: Ribosomal RNA small subunit methyltransferase G (232 aa).

S-adenosyl-L-methionine-binding positions include Gly93, Leu98, 144 to 145 (VE), and Arg163.

The protein belongs to the methyltransferase superfamily. RNA methyltransferase RsmG family.

The protein resides in the cytoplasm. It catalyses the reaction guanosine(527) in 16S rRNA + S-adenosyl-L-methionine = N(7)-methylguanosine(527) in 16S rRNA + S-adenosyl-L-homocysteine. Functionally, specifically methylates the N7 position of guanine in position 527 of 16S rRNA. The protein is Ribosomal RNA small subunit methyltransferase G of Burkholderia pseudomallei (strain 668).